A 453-amino-acid polypeptide reads, in one-letter code: Ribulose bisphosphate carboxylase large chain (453 aa).

A propeptide spanning residues 1–2 (MS) is cleaved from the precursor. An N-acetylproline modification is found at P3. K14 is subject to N6,N6,N6-trimethyllysine. Residues N123 and T173 each coordinate substrate. Residue K175 is the Proton acceptor of the active site. K177 contributes to the substrate binding site. Positions 201, 203, and 204 each coordinate Mg(2+). The residue at position 201 (K201) is an N6-carboxylysine. Catalysis depends on H294, which acts as the Proton acceptor. Residues R295, H327, and S379 each coordinate substrate.

The protein belongs to the RuBisCO large chain family. Type I subfamily. Heterohexadecamer of 8 large chains and 8 small chains; disulfide-linked. The disulfide link is formed within the large subunit homodimers. The cofactor is Mg(2+). Post-translationally, the disulfide bond which can form in the large chain dimeric partners within the hexadecamer appears to be associated with oxidative stress and protein turnover.

The protein localises to the plastid. The protein resides in the chloroplast. It catalyses the reaction 2 (2R)-3-phosphoglycerate + 2 H(+) = D-ribulose 1,5-bisphosphate + CO2 + H2O. It carries out the reaction D-ribulose 1,5-bisphosphate + O2 = 2-phosphoglycolate + (2R)-3-phosphoglycerate + 2 H(+). In terms of biological role, ruBisCO catalyzes two reactions: the carboxylation of D-ribulose 1,5-bisphosphate, the primary event in carbon dioxide fixation, as well as the oxidative fragmentation of the pentose substrate in the photorespiration process. Both reactions occur simultaneously and in competition at the same active site. This chain is Ribulose bisphosphate carboxylase large chain, found in Galium parisiense (Wall bedstraw).